Here is a 373-residue protein sequence, read N- to C-terminus: Protein RETARDED ROOT GROWTH, mitochondrial (373 aa).

The transit peptide at 1 to 49 directs the protein to the mitochondrion; it reads MGKWRAVAALLLRNQLLNSSKRLNLSSSPCVSKHPTIGLASRFLNFRHF. Residues 346–362 form a helical membrane-spanning segment; the sequence is EWCIIFLLAIENAIGIY.

It belongs to the RMD1/sif2 family. In terms of tissue distribution, predominantly expressed in the root meristem, in the primary and lateral root tips. Also present in leaves and pollen.

The protein localises to the mitochondrion membrane. It is found in the mitochondrion. Its function is as follows. Required for the maintenance of mitochondrial structure. Positive regulator of cell division and endoreduplication but negative regulator of cell expansion in the postembryonic root meristem, thus leading to the promotion of root growth. The protein is Protein RETARDED ROOT GROWTH, mitochondrial of Arabidopsis thaliana (Mouse-ear cress).